The primary structure comprises 383 residues: MYTHYLKNLVSFKSVTPNSAGAIEYIDDLLKQHSFKTEIKIFGDSKKEQVTNLYAIFGGNEPNICFVGHVDVVPAGNYEFWHNSNPFKFHEQDGKIYGRGTVDMKGAIACFLAASLNFIKNNTDFKGSISFLITSDEEGKSKHGTKEMLQYIYDQRYKIDFAVVGEPTCEKEIGDTIKIGRRGSVNFKLNIVGLAGHVAYPHKANNPLPCLIKILNELINIKLDEGTEFFQNSNLEVTNIDVDNDTSNTIPASAAAHFNIRFNSLHNVETLRQLIEQIIKQYCKEYKVDYKLEYSSSAESFIQNPNDNDKIKKFANVIERTLKIKSKFSTSGGTSDARFVKDYCSLVEFGLLSDMAHKINEYTKISDLQKLYNVYYNFLIEIL.

Zn(2+) is bound at residue histidine 69. Residue aspartate 71 is part of the active site. Aspartate 103 contacts Zn(2+). Glutamate 137 serves as the catalytic Proton acceptor. Zn(2+) contacts are provided by glutamate 138, glutamate 166, and histidine 357.

The protein belongs to the peptidase M20A family. DapE subfamily. In terms of assembly, homodimer. Zn(2+) serves as cofactor. Requires Co(2+) as cofactor.

It catalyses the reaction N-succinyl-(2S,6S)-2,6-diaminopimelate + H2O = (2S,6S)-2,6-diaminopimelate + succinate. Its pathway is amino-acid biosynthesis; L-lysine biosynthesis via DAP pathway; LL-2,6-diaminopimelate from (S)-tetrahydrodipicolinate (succinylase route): step 3/3. Functionally, catalyzes the hydrolysis of N-succinyl-L,L-diaminopimelic acid (SDAP), forming succinate and LL-2,6-diaminopimelate (DAP), an intermediate involved in the bacterial biosynthesis of lysine and meso-diaminopimelic acid, an essential component of bacterial cell walls. This Rickettsia prowazekii (strain Madrid E) protein is Succinyl-diaminopimelate desuccinylase.